We begin with the raw amino-acid sequence, 239 residues long: Protein GrpE (239 aa).

Disordered regions lie at residues 1–54 and 208–239; these read MIEN…ELKN and SMGP…SEDV. Polar residues predominate over residues 19–42; sequence QDNALENVSSAQELTTENNELSSQ. Basic and acidic residues predominate over residues 43-53; that stretch reads KTEEINTEELK. Residues 228–239 are compositionally biased toward acidic residues; the sequence is DIDSEENTSEDV.

The protein belongs to the GrpE family. As to quaternary structure, homodimer.

Its subcellular location is the cytoplasm. In terms of biological role, participates actively in the response to hyperosmotic and heat shock by preventing the aggregation of stress-denatured proteins, in association with DnaK and GrpE. It is the nucleotide exchange factor for DnaK and may function as a thermosensor. Unfolded proteins bind initially to DnaJ; upon interaction with the DnaJ-bound protein, DnaK hydrolyzes its bound ATP, resulting in the formation of a stable complex. GrpE releases ADP from DnaK; ATP binding to DnaK triggers the release of the substrate protein, thus completing the reaction cycle. Several rounds of ATP-dependent interactions between DnaJ, DnaK and GrpE are required for fully efficient folding. The chain is Protein GrpE from Prochlorococcus marinus (strain AS9601).